A 118-amino-acid polypeptide reads, in one-letter code: Late cornified envelope protein 1F (118 aa).

Over residues 1–10 (MSCQQSQQQC) the composition is skewed to low complexity. Disordered regions lie at residues 1 to 23 (MSCQ…CPPK) and 82 to 118 (RRRS…GGCC). The span at 11 to 23 (QPPPKCTPKCPPK) shows a compositional bias: pro residues. The span at 95–104 (CCSQPSAGSS) shows a compositional bias: low complexity. Gly residues predominate over residues 105 to 118 (CCGGGSGQHSGGCC).

This sequence belongs to the LCE family. As to expression, skin-specific. Expression was readily detected in adult trunk skin, adult arm skin, fetal skin, penal skin, vulva, esophagus and tongue. Not expressed in the cervix, rectum, lung, colon, or placenta. Expression is observed in the fibroblasts.

Functionally, precursors of the cornified envelope of the stratum corneum. The protein is Late cornified envelope protein 1F (LCE1F) of Homo sapiens (Human).